We begin with the raw amino-acid sequence, 892 residues long: Alanine--tRNA ligase (892 aa).

Positions 580, 584, 682, and 686 each coordinate Zn(2+).

This sequence belongs to the class-II aminoacyl-tRNA synthetase family. It depends on Zn(2+) as a cofactor.

Its subcellular location is the cytoplasm. It catalyses the reaction tRNA(Ala) + L-alanine + ATP = L-alanyl-tRNA(Ala) + AMP + diphosphate. Catalyzes the attachment of alanine to tRNA(Ala) in a two-step reaction: alanine is first activated by ATP to form Ala-AMP and then transferred to the acceptor end of tRNA(Ala). Also edits incorrectly charged Ser-tRNA(Ala) and Gly-tRNA(Ala) via its editing domain. The chain is Alanine--tRNA ligase from Salinispora tropica (strain ATCC BAA-916 / DSM 44818 / JCM 13857 / NBRC 105044 / CNB-440).